The sequence spans 167 residues: Ubiquitin-fold modifier-conjugating enzyme 1 (167 aa).

Cys-116 acts as the Glycyl thioester intermediate in catalysis.

It belongs to the ubiquitin-conjugating enzyme family. UFC1 subfamily.

Functionally, E2-like enzyme which forms an intermediate with UFM1 via a thioester linkage. This Anopheles gambiae (African malaria mosquito) protein is Ubiquitin-fold modifier-conjugating enzyme 1.